We begin with the raw amino-acid sequence, 237 residues long: Ribosomal RNA small subunit methyltransferase G (237 aa).

S-adenosyl-L-methionine-binding positions include Gly78, Phe83, 129–130, and Arg148; that span reads AE. Residues 218 to 237 form a disordered region; sequence KKETPNKYPRKAGMPNKRPL.

Belongs to the methyltransferase superfamily. RNA methyltransferase RsmG family.

It localises to the cytoplasm. Functionally, specifically methylates the N7 position of a guanine in 16S rRNA. This is Ribosomal RNA small subunit methyltransferase G from Streptococcus pneumoniae (strain JJA).